Here is a 600-residue protein sequence, read N- to C-terminus: Myelin expression factor 2 (600 aa).

A disordered region spans residues Met1–Arg101. Phosphothreonine is present on Thr13. Ser17 is subject to Phosphoserine. The segment covering Gly27 to Gln42 has biased composition (basic and acidic residues). Residue Lys53 forms a Glycyl lysine isopeptide (Lys-Gly) (interchain with G-Cter in SUMO2) linkage. 2 stretches are compositionally biased toward basic and acidic residues: residues Met54 to Thr72 and Tyr83 to Gly96. RRM domains lie at Asn100–Asp178 and Ser233–Lys310. Omega-N-methylarginine is present on Arg406. Ser431 is modified (phosphoserine). Residues Asn523–Asn599 form the RRM 3 domain.

As to quaternary structure, monomer.

It is found in the nucleus. Its function is as follows. Transcriptional repressor of the myelin basic protein gene (MBP). Binds to the proximal MB1 element 5'-TTGTCC-3' of the MBP promoter. Its binding to MB1 and function are inhibited by PURA. The chain is Myelin expression factor 2 (MYEF2) from Homo sapiens (Human).